We begin with the raw amino-acid sequence, 1338 residues long: Fanconi anemia group I protein (1338 aa).

Residue Lys525 forms a Glycyl lysine isopeptide (Lys-Gly) (interchain with G-Cter in ubiquitin) linkage. Phosphoserine is present on residues Ser558 and Ser561. Thr567 is subject to Phosphothreonine.

The protein belongs to the Fanconi anemia group I protein family. Homodimer. Part of a FANCI-FANCD2 heterodimeric complex that binds and scans dsDNA for DNA damage. Interacts with FANCL. Interacts with MTMR15/FAN1. Interacts with POLN. Interacts with UBL5; the interaction promotes FANCI homodimerization. Monoubiquitinated by FANCL during S phase and upon genotoxic stress. Deubiquitinated by USP1 as cells enter G2/M, or once DNA repair is completed. Monoubiquitination requires the FANCA-FANCB-FANCC-FANCE-FANCF-FANCG-FANCM complex. Ubiquitination is required for binding to chromatin, DNA repair, and normal cell cycle progression. Monoubiquitination is stimulated by DNA-binding. Post-translationally, phosphorylated in response to DNA damage by ATM and/or ATR. Phosphorylation of FANCI promotes ubiquitination of FANCD2, which prevents DNA release from the FANCI-FANCD2 complex.

Functionally, plays an essential role in the repair of DNA double-strand breaks by homologous recombination and in the repair of interstrand DNA cross-links (ICLs) by promoting FANCD2 monoubiquitination by FANCL and participating in recruitment to DNA repair sites. The FANCI-FANCD2 complex binds and scans double-stranded DNA (dsDNA) for DNA damage; this complex stalls at DNA junctions between double-stranded DNA and single-stranded DNA. Participates in S phase and G2 phase checkpoint activation upon DNA damage. This chain is Fanconi anemia group I protein, found in Gallus gallus (Chicken).